We begin with the raw amino-acid sequence, 516 residues long: uncharacterized protein (516 aa).

The next 5 helical transmembrane spans lie at 10 to 27, 32 to 54, 64 to 83, 95 to 117, and 165 to 187; these read IRYPELALFLVIAAGYWI, IGAFSLGPVTGALFAGLVVGDFA, SFLFLLFLFGVGYSVGPQFV, LLAVVVCLTGLAAAIAVGRILGL, and AVCYIFGYAGVIMWCTVVAPALL. RCK C-terminal domains follow at residues 208–291 and 296–376; these read KPGL…SRAE and RELL…NIGV. 4 helical membrane passes run 386 to 408, 412 to 430, 443 to 465, and 480 to 502; these read FVVLGLAIFFGGVVGVLVSFPVG, IALSTSVGTLLAGLLVGHL, GAISLMTSLGLAAFVGLTGIHAG, and LLGGMVVTLLPQIVGFCFGHFVL.

The protein belongs to the AAE transporter (TC 2.A.81) family.

The protein resides in the cell membrane. This is an uncharacterized protein from Bradyrhizobium diazoefficiens (strain JCM 10833 / BCRC 13528 / IAM 13628 / NBRC 14792 / USDA 110).